Consider the following 487-residue polypeptide: Sorting nexin-4 (487 aa).

Residues 1-59 (MDHDDFDSVSWRHGPDSDISRPTTSGTDTAESPETRRDPNGKRRMSSASEIPQAGPHAD) form a disordered region. Over residues 20–32 (SRPTTSGTDTAES) the composition is skewed to polar residues. In terms of domain architecture, PX spans 70 to 192 (VLECRVDTPI…IFLESPDWNA (123 aa)). Residues Arg113, Thr115, Lys139, and Arg158 each contribute to the a 1,2-diacyl-sn-glycero-3-phospho-(1D-myo-inositol-3-phosphate) site. Residues 395 to 430 (EQSRRERMRKLELRIDELTREVESAKTTSEMFDEEV) adopt a coiled-coil conformation.

It belongs to the sorting nexin family.

It localises to the cytoplasm. Its subcellular location is the cytosol. The protein resides in the preautophagosomal structure membrane. It is found in the endosome membrane. In terms of biological role, sorting nexin, involved in the separation or division of vacuoles throughout the entire life cycle of the cells. Involved in retrieval of late-Golgi SNAREs from post-Golgi endosomes to the trans-Golgi network, for cytoplasm to vacuole transport (Cvt), and autophagy of large cargos including mitophagy, pexophagy and glycophagy. The sequence is that of Sorting nexin-4 (snx4) from Emericella nidulans (strain FGSC A4 / ATCC 38163 / CBS 112.46 / NRRL 194 / M139) (Aspergillus nidulans).